We begin with the raw amino-acid sequence, 363 residues long: MSKKPVLNLDTSNGFSEEYISHPERNDNQGIVEITDLVFSSESKLTQRKESRDSKTFVPSFLEELDDDHLHELVTNGGILYMNSLGEGVSGSVRKCRIRGTQMIFAMKTVLAAPNTALQKQLLRELKINRSCTSPYIVKYYGACYNNAECQLNIAMEYCGAGSLDAIYKRVRSQGGRTGERPLGKIAFGVLSGLSYLHDRKIIHRDIKPSNILLTSKGQVKLCDFGVSGELVNSLAGTFTGTSYYMAPERISGGSYTISSDIWSLGLTLMEVALNRFPFPPEGSPPPMPIELLSYIINMPPPLLPQEPGIKWSKSFQHFLCVCLDKDKTRRPGPQKMLTHPWVKAFERIHVDMEEFLRQVWSD.

The Protein kinase domain occupies 79–343 (ILYMNSLGEG…PQKMLTHPWV (265 aa)). ATP is bound by residues 85 to 93 (LGEGVSGSV) and lysine 108. Aspartate 206 serves as the catalytic Proton acceptor. Serine 234 carries the phosphoserine modification. Phosphothreonine is present on threonine 238.

It belongs to the protein kinase superfamily. STE Ser/Thr protein kinase family. MAP kinase kinase subfamily.

It carries out the reaction L-seryl-[protein] + ATP = O-phospho-L-seryl-[protein] + ADP + H(+). The catalysed reaction is L-threonyl-[protein] + ATP = O-phospho-L-threonyl-[protein] + ADP + H(+). The enzyme catalyses L-tyrosyl-[protein] + ATP = O-phospho-L-tyrosyl-[protein] + ADP + H(+). Its activity is regulated as follows. Activated by mkh1. In terms of biological role, involved in the mkh1 signal transduction pathway that plays a role in cell wall integrity. Activates spm1/pmk1 via phosphorylation. The polypeptide is MAP kinase kinase skh1/pek1 (skh1) (Schizosaccharomyces pombe (strain 972 / ATCC 24843) (Fission yeast)).